A 373-amino-acid chain; its full sequence is Flagellar P-ring protein (373 aa).

The signal sequence occupies residues 1–28 (MPRVSTHLVKLAAAALCALLLSAVAASA).

This sequence belongs to the FlgI family. The basal body constitutes a major portion of the flagellar organelle and consists of four rings (L,P,S, and M) mounted on a central rod.

It is found in the periplasm. It localises to the bacterial flagellum basal body. In terms of biological role, assembles around the rod to form the L-ring and probably protects the motor/basal body from shearing forces during rotation. In Rhodopseudomonas palustris (strain ATCC BAA-98 / CGA009), this protein is Flagellar P-ring protein.